Reading from the N-terminus, the 63-residue chain is Large ribosomal subunit protein uL29 (63 aa).

Belongs to the universal ribosomal protein uL29 family.

The polypeptide is Large ribosomal subunit protein uL29 (Yersinia enterocolitica serotype O:8 / biotype 1B (strain NCTC 13174 / 8081)).